A 1369-amino-acid chain; its full sequence is DNA-directed RNA polymerase subunit beta' (1369 aa).

The disordered stretch occupies residues 1–43; the sequence is MTSSSPKTRKSSTKSKAKRGSKSKKAAEIKAVQRLSKTPPPFR. Basic residues predominate over residues 7-24; sequence KTRKSSTKSKAKRGSKSK. Residues Cys253, Cys320, Cys327, and Cys330 each coordinate Zn(2+). Residues 1294–1369 are disordered; the sequence is TVDMPSSPVA…LQEEGLLSDE (76 aa). Positions 1342–1351 are enriched in acidic residues; the sequence is DDELSAEDQM. The segment covering 1357–1369 has biased composition (low complexity); the sequence is LEGLQEEGLLSDE.

The protein belongs to the RNA polymerase beta' chain family. RpoC2 subfamily. In terms of assembly, in cyanobacteria the RNAP catalytic core is composed of 2 alpha, 1 beta, 1 beta', 1 gamma and 1 omega subunit. When a sigma factor is associated with the core the holoenzyme is formed, which can initiate transcription. The cofactor is Zn(2+).

It carries out the reaction RNA(n) + a ribonucleoside 5'-triphosphate = RNA(n+1) + diphosphate. Its function is as follows. DNA-dependent RNA polymerase catalyzes the transcription of DNA into RNA using the four ribonucleoside triphosphates as substrates. In Prochlorococcus marinus (strain NATL1A), this protein is DNA-directed RNA polymerase subunit beta'.